A 109-amino-acid polypeptide reads, in one-letter code: N-alpha-acetyltransferase 38, NatC auxiliary subunit (109 aa).

One can recognise a Sm domain in the interval 23–101 (LARCKLENLL…VVSIEVETES (79 aa)).

Belongs to the snRNP Sm proteins family. Component of the N-terminal acetyltransferase C (NatC) complex.

It is found in the cytoplasm. It localises to the nucleus. Functionally, auxillary component of the N-terminal acetyltransferase C (NatC) complex which catalyzes acetylation of N-terminal methionine residues. N-terminal acetylation protects proteins from ubiquitination and degradation by the N-end rule pathway. The chain is N-alpha-acetyltransferase 38, NatC auxiliary subunit (naa38) from Danio rerio (Zebrafish).